Consider the following 757-residue polypeptide: Cartilage oligomeric matrix protein (757 aa).

An N-terminal signal peptide occupies residues 1–20; the sequence is MVPDTACVLLLTLAALGASG. A COMP N-terminal region spans residues 22–86; that stretch reads GQSPLGSDLG…SVRTGLPSVR (65 aa). Residues 87-126 form the EGF-like 1 domain; sequence PLLHCAPGFCFPGVACIQTESGARCGPCPAGFTGNGSHCT. 21 cysteine pairs are disulfide-bonded: Cys-91–Cys-102, Cys-96–Cys-111, Cys-114–Cys-125, Cys-131–Cys-142, Cys-136–Cys-151, Cys-154–Cys-178, Cys-184–Cys-197, Cys-191–Cys-206, Cys-209–Cys-221, Cys-229–Cys-243, Cys-237–Cys-253, Cys-255–Cys-266, Cys-282–Cys-287, Cys-292–Cys-312, Cys-328–Cys-348, Cys-351–Cys-371, Cys-387–Cys-407, Cys-410–Cys-430, Cys-448–Cys-468, Cys-484–Cys-504, and Cys-520–Cys-741. The N-linked (GlcNAc...) asparagine glycan is linked to Asn-121. The 53-residue stretch at 127 to 179 folds into the EGF-like 2; calcium-binding domain; it reads DVNECNAHPCFPRVRCINTSPGFRCEACPPGYSGPTHQGVGLAFAKANKQVCT. The region spanning 180 to 222 is the EGF-like 3; calcium-binding domain; that stretch reads DINECETGQHNCVPNSVCINTRGSFQCGPCQPGFVGDQASGCQ. Residues 225 to 267 enclose the EGF-like 4 domain; sequence AQRFCPDGSPSECHEHADCVLERDGSRSCVCAVGWAGNGILCG. 8 TSP type-3 repeats span residues 268–300, 301–336, 337–359, 360–395, 396–418, 419–456, 457–492, and 493–528; these read RDTD…NSGQ, EDVD…NPDQ, RNTD…NDDQ, KDTD…NSDQ, KDSD…NPDQ, ADVD…NSAQ, EDSD…NPGQ, and EDAD…EVTL. The interval 298–503 is disordered; it reads SGQEDVDRDG…DADRDGVGDV (206 aa). 2 stretches are compositionally biased toward basic and acidic residues: residues 334–346 and 352–370; these read PDQR…KWGD and RSQK…RGDA. Residues 367–369 carry the Cell attachment site motif; the sequence is RGD. Over residues 467–476 the composition is skewed to acidic residues; that stretch reads ACDDDDDNDG. The interval 527–757 is mediates cell survival and induction of the IAP family of survival proteins; sequence TLTDFRAFQT…DYETHQLRQA (231 aa). Positions 532–746 constitute a TSP C-terminal domain; the sequence is RAFQTVVLDP…LRYRCNDTIP (215 aa). N-linked (GlcNAc...) asparagine glycosylation occurs at Asn-742.

This sequence belongs to the thrombospondin family. Pentamer; disulfide-linked. Exists in a more compact conformation in the presence of calcium and shows a more extended conformation in the absence of calcium. Interacts with ITGB3, ITGA5 and FN1. Binding to FN1 requires the presence of divalent cations (Ca(2+), Mg(2+) or Mn(2+)). The greatest amount of binding is seen in the presence of Mn(2+). Interacts with MATN1, MATN3, MATN4 and ACAN. Binds heparin, heparan sulfate and chondroitin sulfate. EDTA dimishes significantly its binding to ACAN and abolishes its binding to MATN3, MATN4 and chondroitin sulfate. Interacts with collagen I, II and IX, and interaction with these collagens is dependent on the presence of zinc ions. Interacts with ADAMTS12. Interacts with ITGA7. Requires Ca(2+) as cofactor. In terms of processing, proteolytically cleaved by metalloproteases ADAMTS4 and ADAMTS1 with ADAMTS4 showing more potent activity. Abundantly expressed in the chondrocyte extracellular matrix, and is also found in bone, tendon, ligament and synovium and blood vessels. Increased amounts are produced during late stages of osteoarthritis in the area adjacent to the main defect.

It localises to the secreted. Its subcellular location is the extracellular space. The protein resides in the extracellular matrix. In terms of biological role, plays a role in the structural integrity of cartilage via its interaction with other extracellular matrix proteins such as the collagens and fibronectin. Can mediate the interaction of chondrocytes with the cartilage extracellular matrix through interaction with cell surface integrin receptors. Could play a role in the pathogenesis of osteoarthritis. Potent suppressor of apoptosis in both primary chondrocytes and transformed cells. Suppresses apoptosis by blocking the activation of caspase-3 and by inducing the IAP family of survival proteins (BIRC3, BIRC2, BIRC5 and XIAP). Essential for maintaining a vascular smooth muscle cells (VSMCs) contractile/differentiated phenotype under physiological and pathological stimuli. Maintains this phenotype of VSMCs by interacting with ITGA7. This chain is Cartilage oligomeric matrix protein, found in Homo sapiens (Human).